The primary structure comprises 343 residues: Biotin synthase 2 (343 aa).

The Radical SAM core domain maps to 58–285 (NEVQLSTLLS…LTMVRLSAGR (228 aa)). Residues Cys-73, Cys-77, and Cys-80 each coordinate [4Fe-4S] cluster. [2Fe-2S] cluster is bound by residues Cys-117, Cys-148, Cys-208, and Arg-280.

The protein belongs to the radical SAM superfamily. Biotin synthase family. As to quaternary structure, homodimer. [4Fe-4S] cluster serves as cofactor. [2Fe-2S] cluster is required as a cofactor.

The catalysed reaction is (4R,5S)-dethiobiotin + (sulfur carrier)-SH + 2 reduced [2Fe-2S]-[ferredoxin] + 2 S-adenosyl-L-methionine = (sulfur carrier)-H + biotin + 2 5'-deoxyadenosine + 2 L-methionine + 2 oxidized [2Fe-2S]-[ferredoxin]. The protein operates within cofactor biosynthesis; biotin biosynthesis; biotin from 7,8-diaminononanoate: step 2/2. Its function is as follows. Catalyzes the conversion of dethiobiotin (DTB) to biotin by the insertion of a sulfur atom into dethiobiotin via a radical-based mechanism. The chain is Biotin synthase 2 from Polaromonas sp. (strain JS666 / ATCC BAA-500).